We begin with the raw amino-acid sequence, 125 residues long: UPF0231 protein in hemN 3'region (125 aa).

It belongs to the UPF0231 family.

The chain is UPF0231 protein in hemN 3'region from Mannheimia haemolytica (Pasteurella haemolytica).